Here is a 137-residue protein sequence, read N- to C-terminus: Putative pre-16S rRNA nuclease (137 aa).

Belongs to the YqgF nuclease family.

The protein resides in the cytoplasm. Could be a nuclease involved in processing of the 5'-end of pre-16S rRNA. This is Putative pre-16S rRNA nuclease from Clostridium botulinum (strain Alaska E43 / Type E3).